The following is a 397-amino-acid chain: Subtilisin-like protease 3 (397 aa).

The signal sequence occupies residues 1–19 (MGCIKVISVFLAAVAAVDA). Positions 20–116 (RAFFHNRGGN…VEHDRVVKLA (97 aa)) are excised as a propeptide. The region spanning 35-116 (SYIVVMKDGV…VEHDRVVKLA (82 aa)) is the Inhibitor I9 domain. The Peptidase S8 domain occupies 126 to 397 (TWGLGRVSHK…NKLLYNGSGR (272 aa)). Active-site charge relay system residues include Asp158 and His189. Asn250 carries N-linked (GlcNAc...) asparagine glycosylation. Catalysis depends on Ser344, which acts as the Charge relay system. The N-linked (GlcNAc...) asparagine glycan is linked to Asn393.

This sequence belongs to the peptidase S8 family.

It localises to the secreted. In terms of biological role, secreted subtilisin-like serine protease with keratinolytic activity that contributes to pathogenicity. In Arthroderma otae (strain ATCC MYA-4605 / CBS 113480) (Microsporum canis), this protein is Subtilisin-like protease 3 (SUB3).